The chain runs to 125 residues: Large ribosomal subunit protein bL12 (125 aa).

It belongs to the bacterial ribosomal protein bL12 family. Homodimer. Part of the ribosomal stalk of the 50S ribosomal subunit. Forms a multimeric L10(L12)X complex, where L10 forms an elongated spine to which 2 to 4 L12 dimers bind in a sequential fashion. Binds GTP-bound translation factors.

In terms of biological role, forms part of the ribosomal stalk which helps the ribosome interact with GTP-bound translation factors. Is thus essential for accurate translation. This chain is Large ribosomal subunit protein bL12, found in Helicobacter acinonychis (strain Sheeba).